The sequence spans 323 residues: GTP 3',8-cyclase (323 aa).

Positions 4–233 constitute a Radical SAM core domain; that stretch reads KYGREIDYLR…NGPAKYISIE (230 aa). Position 13 (arginine 13) interacts with GTP. [4Fe-4S] cluster contacts are provided by cysteine 20 and cysteine 24. Residue tyrosine 26 participates in S-adenosyl-L-methionine binding. Cysteine 27 contributes to the [4Fe-4S] cluster binding site. A GTP-binding site is contributed by arginine 63. Glycine 67 is an S-adenosyl-L-methionine binding site. Threonine 94 contributes to the GTP binding site. Serine 118 is an S-adenosyl-L-methionine binding site. Lysine 154 provides a ligand contact to GTP. Residue methionine 188 coordinates S-adenosyl-L-methionine. Cysteine 250 and cysteine 253 together coordinate [4Fe-4S] cluster. 255 to 257 lines the GTP pocket; that stretch reads RIR. Cysteine 267 serves as a coordination point for [4Fe-4S] cluster.

It belongs to the radical SAM superfamily. MoaA family. As to quaternary structure, monomer and homodimer. Requires [4Fe-4S] cluster as cofactor.

The catalysed reaction is GTP + AH2 + S-adenosyl-L-methionine = (8S)-3',8-cyclo-7,8-dihydroguanosine 5'-triphosphate + 5'-deoxyadenosine + L-methionine + A + H(+). Its pathway is cofactor biosynthesis; molybdopterin biosynthesis. In terms of biological role, catalyzes the cyclization of GTP to (8S)-3',8-cyclo-7,8-dihydroguanosine 5'-triphosphate. This chain is GTP 3',8-cyclase, found in Clostridium perfringens (strain SM101 / Type A).